The following is a 212-amino-acid chain: Cytochrome c biogenesis ATP-binding export protein CcmA (212 aa).

An ABC transporter domain is found at 8–212; it reads LQATALACER…RSIDLAKGSA (205 aa). 40–47 contacts ATP; the sequence is GPNGSGKT.

The protein belongs to the ABC transporter superfamily. CcmA exporter (TC 3.A.1.107) family. In terms of assembly, the complex is composed of two ATP-binding proteins (CcmA) and two transmembrane proteins (CcmB).

The protein resides in the cell inner membrane. It catalyses the reaction heme b(in) + ATP + H2O = heme b(out) + ADP + phosphate + H(+). In terms of biological role, part of the ABC transporter complex CcmAB involved in the biogenesis of c-type cytochromes; once thought to export heme, this seems not to be the case, but its exact role is uncertain. Responsible for energy coupling to the transport system. The chain is Cytochrome c biogenesis ATP-binding export protein CcmA from Pseudomonas syringae pv. tomato (strain ATCC BAA-871 / DC3000).